The primary structure comprises 166 residues: Thioredoxin, mitochondrial (166 aa).

The N-terminal 59 residues, methionine 1–serine 59, are a transit peptide targeting the mitochondrion. In terms of domain architecture, Thioredoxin spans threonine 61–glycine 166. Active-site nucleophile residues include cysteine 90 and cysteine 93. Cysteine 90 and cysteine 93 form a disulfide bridge. Lysine 152 carries the N6-acetyllysine; alternate modification. N6-succinyllysine; alternate is present on lysine 152.

This sequence belongs to the thioredoxin family. Monomer. In terms of tissue distribution, expressed in several tissues with the highest expression levels in heart, muscle, kidney and adrenal gland.

The protein resides in the mitochondrion. In terms of biological role, important for the control of mitochondrial reactive oxygen species homeostasis, apoptosis regulation and cell viability. Is involved in various redox reactions including the reduction of protein disulfide bonds, through the reversible oxidation of its active center dithiol to a disulfide. This Rattus norvegicus (Rat) protein is Thioredoxin, mitochondrial (Txn2).